The following is a 145-amino-acid chain: Protein phosphatase 1 regulatory subunit 14D (145 aa).

The segment covering 1–14 has biased composition (low complexity); sequence MLSSSPASCTSPSP. The segment at 1-59 is disordered; the sequence is MLSSSPASCTSPSPDGENPCKKVHWASGRRRTSSTDSESKSHPDSSKIPRSRRPSRLTV. Positions 21 to 25 are interaction with protein phosphatase 1; it reads KKVHW. Basic residues predominate over residues 21-32; the sequence is KKVHWASGRRRT. A compositionally biased stretch (basic and acidic residues) spans 37–47; sequence SESKSHPDSSK. Residue Thr58 is modified to Phosphothreonine.

Belongs to the PP1 inhibitor family. In terms of processing, phosphorylated on several residues. Detected in colon, intestine, kidney and brain cortex.

Its subcellular location is the cytoplasm. Its function is as follows. Inhibitor of PPP1CA. Has inhibitory activity only when phosphorylated, creating a molecular switch for regulating the phosphorylation status of PPP1CA substrates and smooth muscle contraction. The polypeptide is Protein phosphatase 1 regulatory subunit 14D (PPP1R14D) (Homo sapiens (Human)).